Here is a 1877-residue protein sequence, read N- to C-terminus: Phosphatidylinositol 4-kinase stt4 (1877 aa).

Residues 1305–1491 (PDSDAASSPI…KPILDRVMDK (187 aa)) enclose the PIK helical domain. Residues 1492–1625 (MINSLSGEDK…EVWQSAIFKV (134 aa)) are pleckstrin homology (PH) domain conferring phosphoinositide binding specificity. Residues 1593 to 1861 (DPEELAVNGT…LIEQSYANKR (269 aa)) form the PI3K/PI4K catalytic domain. The G-loop stretch occupies residues 1599–1605 (VNGTEEE). The interval 1728-1736 (QFKDRHNGN) is catalytic loop. An activation loop region spans residues 1747–1771 (HIDFGFIFDIAPGGITFESAPFKLT).

Belongs to the PI3/PI4-kinase family. Type III PI4K subfamily.

It localises to the cytoplasm. It carries out the reaction a 1,2-diacyl-sn-glycero-3-phospho-(1D-myo-inositol) + ATP = a 1,2-diacyl-sn-glycero-3-phospho-(1D-myo-inositol 4-phosphate) + ADP + H(+). Its function is as follows. Acts on phosphatidylinositol (PI) in the first committed step in the production of the second messenger inositol 1,4,5,-trisphosphate. The chain is Phosphatidylinositol 4-kinase stt4 (stt4) from Schizosaccharomyces pombe (strain 972 / ATCC 24843) (Fission yeast).